The chain runs to 256 residues: Adenylate kinase (256 aa).

49–54 (GAGKGT) lines the ATP pocket. Residues 69-98 (ATGDMLRDQVEKKTPLGIAAKKIMDAGGLV) form an NMP region. AMP contacts are provided by residues Thr70, Arg75, 96-98 (GLV), 125-128 (GFPR), and Gln132. Residues 166–203 (GRLIHPASGRSYHKIFNPPKKAGIDDLTGEPLIQRSDD) are LID. ATP-binding positions include Arg167 and 176 to 177 (SY). AMP-binding residues include Arg200 and Arg211. Residue Gln239 coordinates ATP.

Belongs to the adenylate kinase family. AK2 subfamily. Monomer.

The protein localises to the cytoplasm. The protein resides in the cytosol. It localises to the mitochondrion intermembrane space. The enzyme catalyses AMP + ATP = 2 ADP. Its function is as follows. Catalyzes the reversible transfer of the terminal phosphate group between ATP and AMP. Plays an important role in cellular energy homeostasis and in adenine nucleotide metabolism. Adenylate kinase activity is critical for regulation of the phosphate utilization and the AMP de novo biosynthesis pathways. The sequence is that of Adenylate kinase from Coprinopsis cinerea (strain Okayama-7 / 130 / ATCC MYA-4618 / FGSC 9003) (Inky cap fungus).